The following is a 663-amino-acid chain: Probable acetolactate synthase 2, chloroplastic (663 aa).

Residues 1–26 (MAAAAAAASLSVSDAAAKLPKPGGQV) show a composition bias toward low complexity. The interval 1–56 (MAAAAAAASLSVSDAAAKLPKPGGQVQRRRDRDRPRVDAAACTRDSRRPTRERCST) is disordered. Residues 1-79 (MAAAAAAASL…TPVRAPVRTR (79 aa)) constitute a chloroplast transit peptide. Basic and acidic residues-rich tracts occupy residues 28–37 (RRRDRDRPRV) and 44–54 (RDSRRPTRERC). Glutamate 132 is a binding site for thiamine diphosphate. Cysteine 152 and cysteine 298 are oxidised to a cystine. Residues arginine 234, 340–361 (HGTV…LGVR), and 383–402 (DIDP…ICAD) each bind FAD. The tract at residues 478 to 558 (QHQMWATQHY…VKVMVLNNQH (81 aa)) is thiamine pyrophosphate binding. Aspartate 529 and asparagine 556 together coordinate Mg(2+).

This sequence belongs to the TPP enzyme family. Mg(2+) serves as cofactor. Thiamine diphosphate is required as a cofactor.

It is found in the plastid. The protein localises to the chloroplast. It catalyses the reaction 2 pyruvate + H(+) = (2S)-2-acetolactate + CO2. The protein operates within amino-acid biosynthesis; L-isoleucine biosynthesis; L-isoleucine from 2-oxobutanoate: step 1/4. It participates in amino-acid biosynthesis; L-valine biosynthesis; L-valine from pyruvate: step 1/4. The protein is Probable acetolactate synthase 2, chloroplastic (ALS2) of Oryza sativa subsp. japonica (Rice).